The sequence spans 108 residues: U-scoloptoxin(16)-Sm1a (108 aa).

Positions methionine 1–alanine 19 are cleaved as a signal peptide.

The protein belongs to the scoloptoxin-16 family. Post-translationally, contains 4 disulfide bonds. As to expression, expressed by the venom gland.

Its subcellular location is the secreted. The protein is U-scoloptoxin(16)-Sm1a of Scolopendra morsitans (Tanzanian blue ringleg centipede).